A 170-amino-acid chain; its full sequence is Ribulose bisphosphate carboxylase small subunit, chloroplastic (170 aa).

Transit peptides (chloroplast) lie at residues 1–46 (MAPT…GRIR) and 1–47 (MAPT…RIRC).

The protein belongs to the RuBisCO small chain family. As to quaternary structure, heterohexadecamer of 8 large and 8 small subunits.

The protein localises to the plastid. It localises to the chloroplast. Its function is as follows. RuBisCO catalyzes two reactions: the carboxylation of D-ribulose 1,5-bisphosphate, the primary event in carbon dioxide fixation, as well as the oxidative fragmentation of the pentose substrate. Both reactions occur simultaneously and in competition at the same active site. Although the small subunit is not catalytic it is essential for maximal activity. This Zea mays (Maize) protein is Ribulose bisphosphate carboxylase small subunit, chloroplastic.